Reading from the N-terminus, the 210-residue chain is Transcriptional regulator MxiE (210 aa).

The 101-residue stretch at 99–199 (YHLVLYLLRT…GFSARELSNI (101 aa)) folds into the HTH araC/xylS-type domain. DNA-binding regions (H-T-H motif) lie at residues 118–139 (KSLT…RKAL) and 166–189 (ITSA…KTRL).

Its function is as follows. Necessary for the secretion of ipa invasins. Probable transcriptional regulatory protein. The chain is Transcriptional regulator MxiE (mxiE) from Shigella flexneri.